The sequence spans 398 residues: Ornithine aminotransferase (398 aa).

Lysine 255 is modified (N6-(pyridoxal phosphate)lysine).

Belongs to the class-III pyridoxal-phosphate-dependent aminotransferase family. OAT subfamily. The cofactor is pyridoxal 5'-phosphate.

It is found in the cytoplasm. It carries out the reaction a 2-oxocarboxylate + L-ornithine = L-glutamate 5-semialdehyde + an L-alpha-amino acid. Its pathway is amino-acid biosynthesis; L-proline biosynthesis; L-glutamate 5-semialdehyde from L-ornithine: step 1/1. Catalyzes the interconversion of ornithine to glutamate semialdehyde. The chain is Ornithine aminotransferase from Geobacillus sp. (strain WCH70).